The primary structure comprises 154 residues: Protein X (154 aa).

The tract at residues 68 to 117 is mitochondrial targeting sequence; it reads PCALRFTSARRMETTVNAHRNLPKVLHKRTLGLSVMSTTDLEAYFKDCVF.

Belongs to the orthohepadnavirus protein X family. As to quaternary structure, may form homodimer. May interact with host CEBPA, CFLAR, CREB1, DDB1, E4F1, HBXIP, HSPD1/HSP60, NFKBIA, POLR2E and SMAD4. Interacts with host SMC5-SMC6 complex and induces its degradation. Interacts with host TRPC4AP; leading to prevent ubiquitination of TRPC4AP. Interacts with host PLSCR1; this interaction promotes ubiquitination and degradation of HBx and impairs HBx-mediated cell proliferation. Post-translationally, a fraction may be phosphorylated in insect cells and HepG2 cells, a human hepatoblastoma cell line. Phosphorylated in vitro by host protein kinase C or mitogen-activated protein kinase. N-acetylated in insect cells.

It is found in the host cytoplasm. Its subcellular location is the host nucleus. It localises to the host mitochondrion. In terms of biological role, multifunctional protein that plays a role in silencing host antiviral defenses and promoting viral transcription. Does not seem to be essential for HBV infection. May be directly involved in development of cirrhosis and liver cancer (hepatocellular carcinoma). Most of cytosolic activities involve modulation of cytosolic calcium. The effect on apoptosis is controversial depending on the cell types in which the studies have been conducted. May induce apoptosis by localizing in mitochondria and causing loss of mitochondrial membrane potential. May also modulate apoptosis by binding host CFLAR, a key regulator of the death-inducing signaling complex (DISC). Promotes viral transcription by using the host E3 ubiquitin ligase DDB1 to target the SMC5-SMC6 complex to proteasomal degradation. This host complex would otherwise bind to viral episomal DNA, and prevents its transcription. Moderately stimulates transcription of many different viral and cellular transcription elements. Promoters and enhancers stimulated by HBx contain DNA binding sites for NF-kappa-B, AP-1, AP-2, c-EBP, ATF/CREB, or the calcium-activated factor NF-AT. The chain is Protein X from Hepatitis B virus genotype B1 (isolate Japan/Yamagata-2/1998) (HBV-B).